The sequence spans 261 residues: uncharacterized protein (261 aa).

An N-terminal signal peptide occupies residues 1–22; that stretch reads MIHSKKLTLGICLVLLIILIGG. Residue cysteine 23 is the site of N-palmitoyl cysteine attachment. A lipid anchor (S-diacylglycerol cysteine) is attached at cysteine 23.

It belongs to the staphylococcal tandem lipoprotein family.

The protein resides in the cell membrane. This is an uncharacterized protein from Staphylococcus aureus (strain NCTC 8325 / PS 47).